Reading from the N-terminus, the 254-residue chain is 3-deoxy-manno-octulosonate cytidylyltransferase (254 aa).

It belongs to the KdsB family.

Its subcellular location is the cytoplasm. It carries out the reaction 3-deoxy-alpha-D-manno-oct-2-ulosonate + CTP = CMP-3-deoxy-beta-D-manno-octulosonate + diphosphate. The protein operates within nucleotide-sugar biosynthesis; CMP-3-deoxy-D-manno-octulosonate biosynthesis; CMP-3-deoxy-D-manno-octulosonate from 3-deoxy-D-manno-octulosonate and CTP: step 1/1. It functions in the pathway bacterial outer membrane biogenesis; lipopolysaccharide biosynthesis. Activates KDO (a required 8-carbon sugar) for incorporation into bacterial lipopolysaccharide in Gram-negative bacteria. This Pseudomonas fluorescens (strain ATCC BAA-477 / NRRL B-23932 / Pf-5) protein is 3-deoxy-manno-octulosonate cytidylyltransferase.